A 116-amino-acid chain; its full sequence is Photosystem II reaction center Psb28 protein (116 aa).

This sequence belongs to the Psb28 family. As to quaternary structure, part of the photosystem II complex.

It localises to the plastid. It is found in the chloroplast thylakoid membrane. The protein is Photosystem II reaction center Psb28 protein of Guillardia theta (Cryptophyte).